We begin with the raw amino-acid sequence, 671 residues long: MQPDMSLNVIKMKSSDFLESAELDSGGFGKVSLCFHRTQGLMIMKTVYKGPNCIEHNEALLEEAKMMNRLRHSRVVKLLGVIIEEGKYSLVMEYMEKGNLMHVLKAEMSTPLSVKGRIILEIIEGMCYLHGKGVIHKDLKPENILVDNDFHIKIADLGLASFKMWSKLNNEEHNELREVDGTAKKNGGTLYYMAPEHLNDVNAKPTEKSDVYSFAVVLWAIFANKEPYENAICEQQLIMCIKSGNRPDVDDITEYCPREIISLMKLCWEANPEARPTFPGIEEKFRPFYLSQLEESVEEDVKSLKKEYSNENAVVKRMQSLQLDCVAVPSSRSNSATEQPGSLHSSQGLGMGPVEESWFAPSLEHPQEENEPSLQSKLQDEANYHLYGSRMDRQTKQQPRQNVAYNREEERRRRVSHDPFAQQRPYENFQNTEGKGTAYSSAASHGNAVHQPSGLTSQPQVLYQNNGLYSSHGFGTRPLDPGTAGPRVWYRPIPSHMPSLHNIPVPETNYLGNTPTMPFSSLPPTDESIKYTIYNSTGIQIGAYNYMEIGGTSSSLLDSTNTNFKEEPAAKYQAIFDNTTSLTDKHLDPIRENLGKHWKNCARKLGFTQSQIDEIDHDYERDGLKEKVYQMLQKWVMREGIKGATVGKLAQALHQCSRIDLLSSLIYVSQN.

A Phosphoserine; by IKKA and IKKB modification is found at serine 6. The region spanning 17-289 is the Protein kinase domain; it reads FLESAELDSG…GIEEKFRPFY (273 aa). Serine 20 is subject to Phosphoserine; by autocatalysis. ATP contacts are provided by residues 23–31 and lysine 45; that span reads LDSGGFGKV. At serine 25 the chain carries Phosphoserine; by IKKA and IKKB. Catalysis depends on aspartate 138, which acts as the Proton acceptor. A Phosphoserine; by RIPK3 and autocatalysis modification is found at serine 161. Serine 166 carries the post-translational modification Phosphoserine; by autocatalysis. The segment at 290-582 is interaction with SQSTM1; it reads LSQLEESVEE…QAIFDNTTSL (293 aa). Serine 303 carries the phosphoserine modification. Serine 320, serine 331, and serine 333 each carry phosphoserine; by MAP3K7. The span at 331–348 shows a compositional bias: polar residues; it reads SRSNSATEQPGSLHSSQG. The tract at residues 331-354 is disordered; that stretch reads SRSNSATEQPGSLHSSQGLGMGPV. Lysine 377 is covalently cross-linked (Glycyl lysine isopeptide (Lys-Gly) (interchain with G-Cter in ubiquitin)). Tyrosine 384 carries the phosphotyrosine modification. Residues 389–455 form a disordered region; that stretch reads SRMDRQTKQQ…GNAVHQPSGL (67 aa). Residues 428 to 444 are compositionally biased toward polar residues; sequence NFQNTEGKGTAYSSAAS. Positions 531–547 match the RIP homotypic interaction motif (RHIM) motif; sequence YTIYNSTGIQIGAYNYM. The Death domain occupies 583-669; sequence TDKHLDPIRE…DLLSSLIYVS (87 aa). The (Microbial infection) N-beta-linked (GlcNAc) arginine glycan is linked to arginine 603.

The protein belongs to the protein kinase superfamily. TKL Ser/Thr protein kinase family. As to quaternary structure, homodimer. Interacts (via RIP homotypic interaction motif) with RIPK3 (via RIP homotypic interaction motif); this interaction induces RIPK1 phosphorylation and formation of a RIPK1-RIPK3 necroptosis-inducing complex. Upon TNF-induced necrosis, the RIPK1-RIPK3 dimer further interacts with PGAM5 and MLKL; the formation of this complex leads to PGAM5 phosphorylation and increase in PGAM5 phosphatase activity. Interacts (via the death domain) with TNFRSF6 (via the death domain) and TRADD (via the death domain). Is recruited by TRADD to TNFRSF1A in a TNF-dependent process. Binds RNF216, EGFR, IKBKG, TRAF1, TRAF2 and TRAF3. Interacts with BNLF1. Interacts with SQSTM1 upon TNF-alpha stimulation. May interact with MAVS/IPS1. Interacts with ZFAND5. Interacts with RBCK1. Interacts with ZBP1. Interacts with BIRC2/c-IAP1, BIRC3/c-IAP2 and XIAP/BIRC4. Interacts (via kinase domain) with DAB2IP (via Ras-GAP domain); the interaction occurs in a TNF-alpha-dependent manner. Interacts with ARHGEF2. Interacts (via protein kinase domain) with RFFL; involved in RIPK1 ubiquitination. Interacts with RNF34; involved in RIPK1 ubiquitination. Interacts with TICAM1 and this interaction is enhanced in the presence of WDFY1. Interacts with PELI1. Interacts (via death domain) with CRADD (via death domain); the interaction is direct. Component of complex IIa composed of at least RIPK1, FADD and CASP8. Component of the AIM2 PANoptosome complex, a multiprotein complex that drives inflammatory cell death (PANoptosis). Interacts with MAP3K7, CFLAR, CASP8, FADD and NEMO. Interacts with TAX1BP1; this interaction negatively regulates RIPK1 ubiquitination. Interacts with GRB2. Interacts with DDX24; this interaction disrupts RLR signaling activation of IFN-dependent transcription factor IRF7. (Microbial infection) Interacts with mumps virus protein SH; this interaction inhibits downstream NF-kappa-B pathway activation. In terms of assembly, (Microbial infection) Interacts with Murid herpesvirus 1 protein RIR1. As to quaternary structure, (Microbial infection) Interacts (via RIP homotypic interaction motif) with herpes simplex virus 1/HHV-1 protein RIR1/ICP6 (via RIP homotypic interaction motif); this interaction prevents necroptosis activation. (Microbial infection) Interacts (via RIP homotypic interaction motif) with herpes simplex virus 2/HHV-2 protein RIR1/ICP10 (via RIP homotypic interaction motif); this interaction prevents necroptosis activation. (Microbial infection) Proteolytically cleaved by S.flexneri OspD3 within the RIP homotypic interaction motif (RHIM), leading to its degradation and inhibition of necroptosis. Post-translationally, proteolytically cleaved by CASP8 at Asp-324. Cleavage is crucial for limiting TNF-induced apoptosis, necroptosis and inflammatory response. Cleavage abolishes NF-kappa-B activation and enhances the interaction of TRADD with FADD. Proteolytically cleaved by CASP6 during intrinsic apoptosis. In terms of processing, RIPK1 and RIPK3 undergo reciprocal auto- and trans-phosphorylation. Phosphorylation of Ser-161 by RIPK3 is necessary for the formation of the necroptosis-inducing complex. Phosphorylation at Ser-25 represses its kinase activity and consequently prevents TNF-mediated RIPK1-dependent cell death. Phosphorylated at Ser-320 by MAP3K7 which requires prior ubiquitination with 'Lys-63'-linked chains by BIRC2/c-IAP1 and BIRC3/c-IAP2. This phosphorylation positively regulates RIPK1 interaction with RIPK3 to promote necroptosis but negatively regulates RIPK1 kinase activity and its interaction with FADD to mediate apoptosis. Deubiquitinated by USP7; this modification is required for TNF-alpha-induced apoptosis. Post-translationally, ubiquitinated with 'Lys-11'-, 'Lys-48'-, 'Lys-63'- and linear-linked type ubiquitin. Polyubiquitination with 'Lys-63'-linked chains by TRAF2 induces association with the IKK complex. Deubiquitination of 'Lys-63'-linked chains and polyubiquitination with 'Lys-48'-linked chains by TNFAIP3 leads to RIPK1 proteasomal degradation and consequently down-regulates TNF-alpha-induced NF-kappa-B signaling. 'Lys-48'-linked polyubiquitination by RFFL or RNF34 also promotes proteasomal degradation and negatively regulates TNF-alpha-induced NF-kappa-B signaling. Linear polyubiquitinated; the head-to-tail linear polyubiquitination ('Met-1'-linked) is mediated by the LUBAC complex and decreases protein kinase activity. Deubiquitination of linear polyubiquitin by CYLD promotes the kinase activity. Polyubiquitinated with 'Lys-48' and 'Lys-63'-linked chains by BIRC2/c-IAP1 and BIRC3/c-IAP2, leading to activation of NF-kappa-B. Ubiquitinated with 'Lys-63'-linked chains by PELI1. Ubiquitination at Lys-377 with 'Lys-63'-linked chains by BIRC2/c-IAP1 and BIRC3/c-IAP2 is essential for its phosphorylation at Ser-320 mediated by MAP3K7. This ubiquitination is required for NF-kB activation, suppresses RIPK1 kinase activity and plays a critical role in preventing cell death during embryonic development. In terms of processing, (Microbial infection) Glycosylated at Arg-603 by enteropathogenic E.coli protein NleB1: arginine GlcNAcylation prevents homotypic/heterotypic death domain interactions.

The protein localises to the cytoplasm. Its subcellular location is the cell membrane. It catalyses the reaction L-seryl-[protein] + ATP = O-phospho-L-seryl-[protein] + ADP + H(+). The catalysed reaction is L-threonyl-[protein] + ATP = O-phospho-L-threonyl-[protein] + ADP + H(+). Its activity is regulated as follows. Serine-threonine kinase activity is inhibited by linear polyubiquitination ('Met-1'-linked) by the LUBAC complex. Inhibited by necrostatins, including necrostatin-1, necrostatin-3 and necrostatin-4. Functionally, serine-threonine kinase which is a key regulator of TNF-mediated apoptosis, necroptosis and inflammatory pathways. Exhibits kinase activity-dependent functions that regulate cell death and kinase-independent scaffold functions regulating inflammatory signaling and cell survival. Has kinase-independent scaffold functions: upon binding of TNF to TNFR1, RIPK1 is recruited to the TNF-R1 signaling complex (TNF-RSC also known as complex I) where it acts as a scaffold protein promoting cell survival, in part, by activating the canonical NF-kappa-B pathway. Kinase activity is essential to regulate necroptosis and apoptosis, two parallel forms of cell death: upon activation of its protein kinase activity, regulates assembly of two death-inducing complexes, namely complex IIa (RIPK1-FADD-CASP8), which drives apoptosis, and the complex IIb (RIPK1-RIPK3-MLKL), which drives necroptosis. RIPK1 is required to limit CASP8-dependent TNFR1-induced apoptosis. In normal conditions, RIPK1 acts as an inhibitor of RIPK3-dependent necroptosis, a process mediated by RIPK3 component of complex IIb, which catalyzes phosphorylation of MLKL upon induction by ZBP1. Inhibits RIPK3-mediated necroptosis via FADD-mediated recruitment of CASP8, which cleaves RIPK1 and limits TNF-induced necroptosis. Required to inhibit apoptosis and necroptosis during embryonic development: acts by preventing the interaction of TRADD with FADD thereby limiting aberrant activation of CASP8. In addition to apoptosis and necroptosis, also involved in inflammatory response by promoting transcriptional production of pro-inflammatory cytokines, such as interleukin-6 (IL6). Phosphorylates RIPK3: RIPK1 and RIPK3 undergo reciprocal auto- and trans-phosphorylation. Phosphorylates DAB2IP at 'Ser-728' in a TNF-alpha-dependent manner, and thereby activates the MAP3K5-JNK apoptotic cascade. Required for ZBP1-induced NF-kappa-B activation in response to DNA damage. In Homo sapiens (Human), this protein is Receptor-interacting serine/threonine-protein kinase 1.